Consider the following 538-residue polypeptide: Chaperonin GroEL (538 aa).

ATP is bound by residues 29–32, 86–90, G413, 476–478, and D492; these read TIGP, DGTTT, and NAA.

The protein belongs to the chaperonin (HSP60) family. Forms a cylinder of 14 subunits composed of two heptameric rings stacked back-to-back. Interacts with the co-chaperonin GroES.

Its subcellular location is the cytoplasm. It catalyses the reaction ATP + H2O + a folded polypeptide = ADP + phosphate + an unfolded polypeptide.. Functionally, together with its co-chaperonin GroES, plays an essential role in assisting protein folding. The GroEL-GroES system forms a nano-cage that allows encapsulation of the non-native substrate proteins and provides a physical environment optimized to promote and accelerate protein folding. This chain is Chaperonin GroEL, found in Staphylococcus aureus (strain NCTC 8325 / PS 47).